The sequence spans 517 residues: MDIIGGQHLRQMWDDLADVYGHKTALICESSGGVVNRYSYLELNQEINRTANLFYTLGIRKGNKVALHLDNCPEFIFCWFGLAKIGAIMVPINARLLREESEWILQNSQACLLVTSAQFYPMYQQIQQEDATQLRHICLTDVALPADDGVSSFTQLKNQQPATLCYAPPLSTDDTAEILFTSGTTSRPKGVVITHYNLRFAGYYSAWQCALRDDDVYMTVMPAFHIDCQCTAAMAAFSAGATFVLVEKYSARAFWGQAQKYRATITECIPMMIRTLMVQPPSANDRQHRLREVMFYLNLSEQEKDAFCERFGVRLLTSYGMTETIVGIIGDRPSDKRRWPSIGRAGFCYEAEIRDDHNRPLPAGEIGEICIKGVPGKTIFKEYFLNPKATAKVLEADGWLHTGDTGYRDEEGFFYFVDRRCNMIKRGGENVSCVELENIIATHPKIQDIVVVGIKDSIRDEAIKAFVVLNEGETLSEEEFFRFCEQNMAKFKVPSYLEIRKDLPRNCSGKIIRKNLK.

This sequence belongs to the ATP-dependent AMP-binding enzyme family.

The enzyme catalyses 4-(trimethylamino)butanoate + ATP + CoA = 4-(trimethylamino)butanoyl-CoA + AMP + diphosphate. It catalyses the reaction crotonobetaine + ATP + CoA = crotonobetainyl-CoA + AMP + diphosphate. It carries out the reaction (R)-carnitine + ATP + CoA = (R)-carnitinyl-CoA + AMP + diphosphate. Its pathway is amine and polyamine metabolism; carnitine metabolism. In terms of biological role, catalyzes the transfer of CoA to carnitine, generating the initial carnitinyl-CoA needed for the CaiB reaction cycle. Also has activity toward crotonobetaine and gamma-butyrobetaine. The chain is Crotonobetaine/carnitine--CoA ligase from Shigella flexneri.